A 357-amino-acid chain; its full sequence is Phenylalanine--tRNA ligase alpha subunit (357 aa).

Mg(2+) is bound at residue Glu278.

The protein belongs to the class-II aminoacyl-tRNA synthetase family. Phe-tRNA synthetase alpha subunit type 1 subfamily. In terms of assembly, tetramer of two alpha and two beta subunits. It depends on Mg(2+) as a cofactor.

Its subcellular location is the cytoplasm. The catalysed reaction is tRNA(Phe) + L-phenylalanine + ATP = L-phenylalanyl-tRNA(Phe) + AMP + diphosphate + H(+). This Albidiferax ferrireducens (strain ATCC BAA-621 / DSM 15236 / T118) (Rhodoferax ferrireducens) protein is Phenylalanine--tRNA ligase alpha subunit.